The primary structure comprises 371 residues: Spermidine/putrescine import ATP-binding protein PotA (371 aa).

The ABC transporter domain occupies 10–240; sequence VELRNVTKSY…PKNLFVARFI (231 aa). 42–49 contributes to the ATP binding site; that stretch reads GPSGCGKT.

This sequence belongs to the ABC transporter superfamily. Spermidine/putrescine importer (TC 3.A.1.11.1) family. The complex is composed of two ATP-binding proteins (PotA), two transmembrane proteins (PotB and PotC) and a solute-binding protein (PotD).

It is found in the cell inner membrane. The enzyme catalyses ATP + H2O + polyamine-[polyamine-binding protein]Side 1 = ADP + phosphate + polyamineSide 2 + [polyamine-binding protein]Side 1.. Functionally, part of the ABC transporter complex PotABCD involved in spermidine/putrescine import. Responsible for energy coupling to the transport system. This Haemophilus ducreyi (strain 35000HP / ATCC 700724) protein is Spermidine/putrescine import ATP-binding protein PotA.